Reading from the N-terminus, the 216-residue chain is Dephospho-CoA kinase (216 aa).

A DPCK domain is found at 18–216 (IIGVIGPPCS…SELASVLQSK (199 aa)). 26–31 (CSGKST) serves as a coordination point for ATP.

The protein belongs to the CoaE family.

Its subcellular location is the cytoplasm. It carries out the reaction 3'-dephospho-CoA + ATP = ADP + CoA + H(+). It participates in cofactor biosynthesis; coenzyme A biosynthesis; CoA from (R)-pantothenate: step 5/5. Catalyzes the phosphorylation of the 3'-hydroxyl group of dephosphocoenzyme A to form coenzyme A. The polypeptide is Dephospho-CoA kinase (Rhodopirellula baltica (strain DSM 10527 / NCIMB 13988 / SH1)).